The chain runs to 393 residues: Chorismate synthase (393 aa).

Residues Arg-40 and Arg-46 each contribute to the NADP(+) site. Residues 129–131, 249–250, Gly-301, 316–320, and Arg-342 each bind FMN; these read RSS, QA, and KPIPT.

This sequence belongs to the chorismate synthase family. Homotetramer. The cofactor is FMNH2.

It catalyses the reaction 5-O-(1-carboxyvinyl)-3-phosphoshikimate = chorismate + phosphate. The protein operates within metabolic intermediate biosynthesis; chorismate biosynthesis; chorismate from D-erythrose 4-phosphate and phosphoenolpyruvate: step 7/7. In terms of biological role, catalyzes the anti-1,4-elimination of the C-3 phosphate and the C-6 proR hydrogen from 5-enolpyruvylshikimate-3-phosphate (EPSP) to yield chorismate, which is the branch point compound that serves as the starting substrate for the three terminal pathways of aromatic amino acid biosynthesis. This reaction introduces a second double bond into the aromatic ring system. This is Chorismate synthase from Geobacter metallireducens (strain ATCC 53774 / DSM 7210 / GS-15).